The sequence spans 79 residues: Short neurotoxin 4 (79 aa).

The first 21 residues, Met-1–Thr-21, serve as a signal peptide directing secretion. Intrachain disulfides connect Cys-24–Cys-41, Cys-34–Cys-59, and Cys-63–Cys-71.

It belongs to the three-finger toxin family. Short-chain subfamily. Type III alpha-neurotoxin sub-subfamily. As to expression, expressed by the venom gland.

It localises to the secreted. Its function is as follows. Binds with high affinity to muscle nicotinic acetylcholine receptor (nAChR) and hinders acetylcholine binding to the receptor, thereby impairing neuromuscular transmission. Causes muscle paralysis, spasms and increased respiration. The protein is Short neurotoxin 4 of Pseudonaja textilis (Eastern brown snake).